The chain runs to 73 residues: uncharacterized protein (73 aa).

This is an uncharacterized protein from Autographa californica nuclear polyhedrosis virus (AcMNPV).